A 461-amino-acid chain; its full sequence is Photosystem II CP43 reaction center protein (461 aa).

Positions 1–2 (ME) are excised as a propeptide. Position 3 is an N-acetylthreonine (Thr3). Thr3 carries the post-translational modification Phosphothreonine. 5 helical membrane-spanning segments follow: residues 57-81 (LFEVAHFVPEKPMYEQGLILLPHLA), 122-143 (LLGPETLEESFPFFGYVWKDRN), 166-188 (KASYFGGIYDTWAPGGGDVRKIT), 243-263 (KPFAWARRALVWSGEAYLSYS), and 279-300 (WFNNTAYPSEFYGPTGPEASQA). Glu355 is a [CaMn4O5] cluster binding site. A helical transmembrane segment spans residues 435 to 459 (RARAAAAGFEKGIDRDFEPVLSMTP).

This sequence belongs to the PsbB/PsbC family. PsbC subfamily. In terms of assembly, PSII is composed of 1 copy each of membrane proteins PsbA, PsbB, PsbC, PsbD, PsbE, PsbF, PsbH, PsbI, PsbJ, PsbK, PsbL, PsbM, PsbT, PsbX, PsbY, PsbZ, Psb30/Ycf12, at least 3 peripheral proteins of the oxygen-evolving complex and a large number of cofactors. It forms dimeric complexes. Binds multiple chlorophylls and provides some of the ligands for the Ca-4Mn-5O cluster of the oxygen-evolving complex. It may also provide a ligand for a Cl- that is required for oxygen evolution. PSII binds additional chlorophylls, carotenoids and specific lipids. serves as cofactor.

The protein localises to the plastid. It is found in the chloroplast thylakoid membrane. Its function is as follows. One of the components of the core complex of photosystem II (PSII). It binds chlorophyll and helps catalyze the primary light-induced photochemical processes of PSII. PSII is a light-driven water:plastoquinone oxidoreductase, using light energy to abstract electrons from H(2)O, generating O(2) and a proton gradient subsequently used for ATP formation. The polypeptide is Photosystem II CP43 reaction center protein (Lotus japonicus (Lotus corniculatus var. japonicus)).